An 85-amino-acid polypeptide reads, in one-letter code: Small ribosomal subunit protein bS16c (85 aa).

The protein belongs to the bacterial ribosomal protein bS16 family.

The protein resides in the plastid. It localises to the chloroplast. The polypeptide is Small ribosomal subunit protein bS16c (Oryza nivara (Indian wild rice)).